The primary structure comprises 518 residues: PTS system mannitol-specific EIICB component (518 aa).

At 1-31 (MDTMSNSQQNKGIGRKVQAFGSFLSSMIMPN) the chain is on the cytoplasmic side. The PTS EIIC type-2 domain occupies 20–352 (FGSFLSSMIM…LKFTKDPKQD (333 aa)). Residues 32 to 53 (IGAFIAWGFIAAIFIDNGWFPN) form a helical membrane-spanning segment. The Extracellular segment spans residues 54–57 (KDLA). Residues 58-78 (QLAGPMITYLIPLLIAFSGGR) traverse the membrane as a helical segment. Over 79–142 (LIHDLRGGII…QGFEMLFNNF (64 aa)) the chain is Cytoplasmic. A helical membrane pass occupies residues 143–164 (SAGILGFIMTIFGFEVLAPIMK). Topologically, residues 165–173 (FIMHILSVG) are extracellular. The helical transmembrane segment at 174–194 (VEALVHAHLLPLVSILVEPAK) threads the bilayer. Residues 195–281 (IVFLNNAINH…VLMRPLLFVS (87 aa)) are Cytoplasmic-facing. The helical transmembrane segment at 282-301 (VILGGMTGVATYSLLDFGFK) threads the bilayer. Over 302-321 (TPASPGSIIVYAINAPKGEF) the chain is Extracellular. A helical transmembrane segment spans residues 322–343 (LHMLTGVVLAALVSFVVSALIL). The Cytoplasmic portion of the chain corresponds to 344-518 (KFTKDPKQDL…LINNLKEDQD (175 aa)). A disordered region spans residues 369–406 (SVASKLSAKDDNKAADNKTAETTTATAASNKAEDKDSD). Basic and acidic residues predominate over residues 375 to 387 (SAKDDNKAADNKT). Positions 388–398 (AETTTATAASN) are enriched in low complexity. The region spanning 426 to 518 (DHVIFACDAG…LINNLKEDQD (93 aa)) is the PTS EIIB type-2 domain. The Phosphocysteine intermediate role is filled by Cys432. Cys432 carries the phosphocysteine; by EIIA modification.

In terms of assembly, homodimer.

The protein resides in the cell membrane. The catalysed reaction is D-mannitol(out) + N(pros)-phospho-L-histidyl-[protein] = D-mannitol 1-phosphate(in) + L-histidyl-[protein]. Its function is as follows. The phosphoenolpyruvate-dependent sugar phosphotransferase system (sugar PTS), a major carbohydrate active transport system, catalyzes the phosphorylation of incoming sugar substrates concomitantly with their translocation across the cell membrane. The enzyme II CmtAB PTS system is involved in D-mannitol transport. In Staphylococcus carnosus, this protein is PTS system mannitol-specific EIICB component.